Here is an 800-residue protein sequence, read N- to C-terminus: Probable replication endonuclease from prophage-like region (800 aa).

Residues Y503 and Y507 each act as O-(5'-phospho-DNA)-tyrosine intermediate in the active site.

The protein belongs to the phage GPA family.

Functionally, possible endonuclease which induces a single-strand cut and initiates DNA replication. The polypeptide is Probable replication endonuclease from prophage-like region (Salmonella paratyphi A (strain ATCC 9150 / SARB42)).